The chain runs to 847 residues: B-cell receptor CD22 (847 aa).

The N-terminal stretch at 1–19 is a signal peptide; that stretch reads MHLLGPWLLLLVLEYLAFC. An Ig-like V-type domain is found at 20 to 138; the sequence is DSSKWAFEHP…MERIHLNVSE (119 aa). The Extracellular portion of the chain corresponds to 20 to 687; sequence DSSKWAFEHP…YYSPETIGRR (668 aa). Residues Asn-67, Asn-101, and Asn-112 are each glycosylated (N-linked (GlcNAc...) asparagine). Arg-120 lines the N-acetylneuraminate pocket. 9 N-linked (GlcNAc...) asparagine glycosylation sites follow: Asn-135, Asn-164, Asn-231, Asn-295, Asn-363, Asn-428, Asn-445, Asn-448, and Asn-479. Ig-like C2-type domains follow at residues 143 to 235, 242 to 324, 331 to 416, 419 to 500, 505 to 582, and 593 to 676; these read PHIQ…DTVQ, PKLE…AEVF, PEPS…LDVQ, PKKV…VALN, PRDV…QTAS, and PRRL…STLN. Cys-161 and Cys-219 are joined by a disulfide. Disulfide bonds link Cys-265/Cys-309 and Cys-353/Cys-396. Cystine bridges form between Cys-442–Cys-484 and Cys-529–Cys-571. N-linked (GlcNAc...) asparagine glycans are attached at residues Asn-574 and Asn-634. The cysteines at positions 616 and 659 are disulfide-linked. Residues 688–708 traverse the membrane as a helical segment; that stretch reads VAVGLGSCLAILILAICGLKL. Residues 709 to 847 lie on the Cytoplasmic side of the membrane; it reads QRRWKRTQSQ…ENVDYVILKH (139 aa). Phosphoserine occurs at positions 725, 726, and 729. Short sequence motifs (ITIM motif) lie at residues 760 to 765 and 794 to 799; these read ISYTTL and VTYSVL. Phosphotyrosine is present on Tyr-762. Phosphotyrosine is present on residues Tyr-807, Tyr-822, and Tyr-842. Short sequence motifs (ITIM motif) lie at residues 820–825 and 840–845; these read IHYSEL and VDYVIL.

It belongs to the immunoglobulin superfamily. SIGLEC (sialic acid binding Ig-like lectin) family. Predominantly monomer of isoform CD22-beta. Also found as heterodimer of isoform CD22-beta and a shorter isoform. Interacts with PTPN6/SHP-1, LYN, SYK, PIK3R1/PIK3R2 and PLCG1 upon phosphorylation. Interacts with GRB2, INPP5D and SHC1 upon phosphorylation. May form a complex with INPP5D/SHIP, GRB2 and SHC1. Phosphorylation of Tyr-762, Tyr-807 and Tyr-822 are involved in binding to SYK, GRB2 and SYK, respectively. Phosphorylation of Tyr-842 is involved in binding to SYK, PLCG2 and PIK3R1/PIK3R2. In terms of processing, phosphorylated on tyrosine residues by LYN.

Its subcellular location is the cell membrane. In terms of biological role, most highly expressed siglec (sialic acid-binding immunoglobulin-like lectin) on B-cells that plays a role in various aspects of B-cell biology including differentiation, antigen presentation, and trafficking to bone marrow. Binds to alpha 2,6-linked sialic acid residues of surface molecules such as CD22 itself, CD45 and IgM in a cis configuration. Can also bind to ligands on other cells as an adhesion molecule in a trans configuration. Acts as an inhibitory coreceptor on the surface of B-cells and inhibits B-cell receptor induced signaling, characterized by inhibition of the calcium mobilization and cellular activation. Mechanistically, the immunoreceptor tyrosine-based inhibitory motif domain is phosphorylated by the Src kinase LYN, which in turn leads to the recruitment of the protein tyrosine phosphatase 1/PTPN6, leading to the negative regulation of BCR signaling. If this negative signaling from is of sufficient strength, apoptosis of the B-cell can be induced. This Gorilla gorilla gorilla (Western lowland gorilla) protein is B-cell receptor CD22.